A 328-amino-acid polypeptide reads, in one-letter code: Phosphatidate cytidylyltransferase (328 aa).

The span at 15-29 shows a compositional bias: polar residues; sequence SGRSATKSVTTNDAG. Residues 15–50 form a disordered region; it reads SGRSATKSVTTNDAGTGNPAEQPARGAKQQPATETS. 7 helical membrane passes run 58 to 78, 103 to 123, 124 to 144, 173 to 193, 202 to 222, 239 to 259, and 263 to 283; these read AAIV…VFVP, AGYL…VWLT, WPFG…VCMI, ATVF…MLVY, FCMM…GVLF, GFAG…TFLV, and PWIG…GDLV.

The protein belongs to the CDS family.

It localises to the cell membrane. The catalysed reaction is a 1,2-diacyl-sn-glycero-3-phosphate + CTP + H(+) = a CDP-1,2-diacyl-sn-glycerol + diphosphate. The protein operates within phospholipid metabolism; CDP-diacylglycerol biosynthesis; CDP-diacylglycerol from sn-glycerol 3-phosphate: step 3/3. The protein is Phosphatidate cytidylyltransferase (cdsA) of Mycobacterium tuberculosis (strain CDC 1551 / Oshkosh).